Reading from the N-terminus, the 72-residue chain is Protein kish-A (72 aa).

An N-terminal signal peptide occupies residues 1–26 (MSAIFNFQSLLTVILLLICTCAYIRS). At 27-53 (LAPSILDRNKTGLLGIFWKCARIGERK) the chain is on the extracellular side. An N-linked (GlcNAc...) asparagine glycan is attached at N35. The helical transmembrane segment at 54–71 (SPYVAICCIVMAFSILFI) threads the bilayer. Residue Q72 is a topological domain, cytoplasmic.

It belongs to the KISH family.

It is found in the golgi apparatus membrane. In terms of biological role, involved in the early part of the secretory pathway. The protein is Protein kish-A (Tmem167a) of Mus musculus (Mouse).